Reading from the N-terminus, the 271-residue chain is 4-diphosphocytidyl-2-C-methyl-D-erythritol kinase (271 aa).

Lysine 17 is a catalytic residue. 97–107 (PVGSGLGGGSS) lines the ATP pocket. Aspartate 137 is a catalytic residue.

This sequence belongs to the GHMP kinase family. IspE subfamily.

The enzyme catalyses 4-CDP-2-C-methyl-D-erythritol + ATP = 4-CDP-2-C-methyl-D-erythritol 2-phosphate + ADP + H(+). It functions in the pathway isoprenoid biosynthesis; isopentenyl diphosphate biosynthesis via DXP pathway; isopentenyl diphosphate from 1-deoxy-D-xylulose 5-phosphate: step 3/6. In terms of biological role, catalyzes the phosphorylation of the position 2 hydroxy group of 4-diphosphocytidyl-2C-methyl-D-erythritol. The polypeptide is 4-diphosphocytidyl-2-C-methyl-D-erythritol kinase (Thermotoga maritima (strain ATCC 43589 / DSM 3109 / JCM 10099 / NBRC 100826 / MSB8)).